A 320-amino-acid polypeptide reads, in one-letter code: Aspartate carbamoyltransferase catalytic subunit (320 aa).

2 residues coordinate carbamoyl phosphate: Arg68 and Thr69. Position 96 (Lys96) interacts with L-aspartate. Residues Arg118, His148, and Gln151 each coordinate carbamoyl phosphate. L-aspartate is bound by residues Arg181 and Arg236. Residues Gly277 and Pro278 each coordinate carbamoyl phosphate.

It belongs to the aspartate/ornithine carbamoyltransferase superfamily. ATCase family. In terms of assembly, heterododecamer (2C3:3R2) of six catalytic PyrB chains organized as two trimers (C3), and six regulatory PyrI chains organized as three dimers (R2).

The catalysed reaction is carbamoyl phosphate + L-aspartate = N-carbamoyl-L-aspartate + phosphate + H(+). It participates in pyrimidine metabolism; UMP biosynthesis via de novo pathway; (S)-dihydroorotate from bicarbonate: step 2/3. Its function is as follows. Catalyzes the condensation of carbamoyl phosphate and aspartate to form carbamoyl aspartate and inorganic phosphate, the committed step in the de novo pyrimidine nucleotide biosynthesis pathway. This Methylibium petroleiphilum (strain ATCC BAA-1232 / LMG 22953 / PM1) protein is Aspartate carbamoyltransferase catalytic subunit.